The following is a 267-amino-acid chain: Phosphate import ATP-binding protein PstB 2 (267 aa).

The ABC transporter domain occupies 21–262; it reads LSTKDVHVYY…AKLQSTNDYV (242 aa). Residue 53-60 participates in ATP binding; sequence GPSGSGKS.

It belongs to the ABC transporter superfamily. Phosphate importer (TC 3.A.1.7) family. The complex is composed of two ATP-binding proteins (PstB), two transmembrane proteins (PstC and PstA) and a solute-binding protein (PstS).

It localises to the cell membrane. It catalyses the reaction phosphate(out) + ATP + H2O = ADP + 2 phosphate(in) + H(+). Functionally, part of the ABC transporter complex PstSACB involved in phosphate import. Responsible for energy coupling to the transport system. This chain is Phosphate import ATP-binding protein PstB 2, found in Streptococcus pneumoniae serotype 4 (strain ATCC BAA-334 / TIGR4).